We begin with the raw amino-acid sequence, 374 residues long: DNA replication and repair protein RecF (374 aa).

Residue 30–37 (GPNAQGKT) participates in ATP binding.

It belongs to the RecF family.

It is found in the cytoplasm. In terms of biological role, the RecF protein is involved in DNA metabolism; it is required for DNA replication and normal SOS inducibility. RecF binds preferentially to single-stranded, linear DNA. It also seems to bind ATP. The sequence is that of DNA replication and repair protein RecF from Lactobacillus gasseri (strain ATCC 33323 / DSM 20243 / BCRC 14619 / CIP 102991 / JCM 1131 / KCTC 3163 / NCIMB 11718 / NCTC 13722 / AM63).